We begin with the raw amino-acid sequence, 239 residues long: Cell number regulator 6 (239 aa).

A compositionally biased stretch (polar residues) spans 1 to 10 (MAEDATSSHP). The disordered stretch occupies residues 1–33 (MAEDATSSHPSRYVKLTKDQDAPAEDIRPGELN). Residues 16–29 (LTKDQDAPAEDIRP) are compositionally biased toward basic and acidic residues. Transmembrane regions (helical) follow at residues 107–127 (CVCH…TAIF) and 136–156 (FLIG…TGIF).

Belongs to the cornifelin family. In terms of tissue distribution, expressed in roots, leaves, stalks, apical meristems, immature ears, endosperm, pericarp and tassel spikelets.

The protein resides in the membrane. This is Cell number regulator 6 (CNR6) from Zea mays (Maize).